Consider the following 541-residue polypeptide: Transmembrane protein 87A (541 aa).

Residues 1 to 26 (MAAASFQPLKCLLLWVFFVITPPVKA) form the signal peptide. At 27 to 209 (VPEPGIWTVP…HGFISASDWP (183 aa)) the chain is on the lumenal side. N-linked (GlcNAc...) asparagine glycans are attached at residues Asn52, Asn109, Asn148, and Asn189. Cystine bridges form between Cys65–Cys116 and Cys82–Cys416. A helical membrane pass occupies residues 210–230 (LMIFYMVMCIMYILLALLWFI). Topologically, residues 231–241 (WSACYWKDLLR) are cytoplasmic. A helical transmembrane segment spans residues 242–262 (IQFWIAAVIFLGMLEKAVYYA). Residues 263-293 (EYQNTDNTGVSSHGLLIFAELISSIKRTLAR) are Lumenal-facing. Residues 294-314 (LLVTIVSLGYGIIKPRLGAVM) traverse the membrane as a helical segment. At 315 to 316 (HR) the chain is on the cytoplasmic side. The chain crosses the membrane as a helical span at residues 317–337 (VVGMGVLYFVFAAVEGVMRII). Topologically, residues 338-344 (GAKEYDL) are lumenal. The chain crosses the membrane as a helical span at residues 345-365 (VLLAGIPLALLDSGLCWWIFV). Topologically, residues 366-384 (SLAQTMKTLKLRKNTVKYS) are cytoplasmic. The helical transmembrane segment at 385–405 (LYRHFTNTLIFAILASIIFMI) threads the bilayer. Residues 406–422 (WRTKKFQLVDCQADWME) are Lumenal-facing. The chain crosses the membrane as a helical span at residues 423–443 (LWVDDAYWRFLFFIILLVIMF). The Cytoplasmic portion of the chain corresponds to 444-541 (LWRPSANNQR…MTKYEMSKIE (98 aa)).

It belongs to the LU7TM family. TMEM87 subfamily.

The protein resides in the cell membrane. It is found in the golgi apparatus membrane. Its function is as follows. Potential monoatomic ion channel gated by mechanical force, implicated in normal touch sensitivity through the generation of mechanically activated currents. However, a direct channel activity is debated and an alternative could be that it functions as a chaperone for an unidentified mechanosensitive ion channel. Could also be involved in cell mechanosensitivity regulating cell adhesion and migration. May also be involved in retrograde transport from endosomes to the trans-Golgi network (TGN). This is Transmembrane protein 87A from Xenopus tropicalis (Western clawed frog).